The following is a 324-amino-acid chain: Thiamine thiazole synthase (324 aa).

Residues Cys-86, 107 to 108 (EA), Gly-115, and Val-180 contribute to the substrate site. Cys-213 bears the 2,3-didehydroalanine (Cys) mark. Substrate is bound by residues Asp-215, His-230, Met-282, and 292–294 (RMG).

The protein belongs to the THI4 family. Homooctamer. Requires Fe cation as cofactor. In terms of processing, during the catalytic reaction, a sulfide is transferred from Cys-213 to a reaction intermediate, generating a dehydroalanine residue.

The protein resides in the cytoplasm. It localises to the nucleus. The enzyme catalyses [ADP-thiazole synthase]-L-cysteine + glycine + NAD(+) = [ADP-thiazole synthase]-dehydroalanine + ADP-5-ethyl-4-methylthiazole-2-carboxylate + nicotinamide + 3 H2O + 2 H(+). Its function is as follows. Involved in biosynthesis of the thiamine precursor thiazole. Catalyzes the conversion of NAD and glycine to adenosine diphosphate 5-(2-hydroxyethyl)-4-methylthiazole-2-carboxylic acid (ADT), an adenylated thiazole intermediate. The reaction includes an iron-dependent sulfide transfer from a conserved cysteine residue of the protein to a thiazole intermediate. The enzyme can only undergo a single turnover, which suggests it is a suicide enzyme. May have additional roles in adaptation to various stress conditions and in DNA damage tolerance. This Fusarium solani subsp. phaseoli (Nectria haematococca) protein is Thiamine thiazole synthase (sti35).